The sequence spans 129 residues: Small ribosomal subunit protein bS6 (129 aa).

Basic and acidic residues predominate over residues 110 to 121; the sequence is FVRRDDERREDT. A disordered region spans residues 110–129; sequence FVRRDDERREDTVEAASSEE.

It belongs to the bacterial ribosomal protein bS6 family.

Its function is as follows. Binds together with bS18 to 16S ribosomal RNA. The chain is Small ribosomal subunit protein bS6 from Aeromonas salmonicida (strain A449).